Reading from the N-terminus, the 458-residue chain is Light-independent protochlorophyllide reductase subunit N (458 aa).

[4Fe-4S] cluster is bound by residues C22, C47, and C107.

This sequence belongs to the BchN/ChlN family. Protochlorophyllide reductase is composed of three subunits; ChlL, ChlN and ChlB. Forms a heterotetramer of two ChlB and two ChlN subunits. Requires [4Fe-4S] cluster as cofactor.

The protein resides in the plastid. It localises to the chloroplast. It carries out the reaction chlorophyllide a + oxidized 2[4Fe-4S]-[ferredoxin] + 2 ADP + 2 phosphate = protochlorophyllide a + reduced 2[4Fe-4S]-[ferredoxin] + 2 ATP + 2 H2O. It functions in the pathway porphyrin-containing compound metabolism; chlorophyll biosynthesis (light-independent). Functionally, component of the dark-operative protochlorophyllide reductase (DPOR) that uses Mg-ATP and reduced ferredoxin to reduce ring D of protochlorophyllide (Pchlide) to form chlorophyllide a (Chlide). This reaction is light-independent. The NB-protein (ChlN-ChlB) is the catalytic component of the complex. This chain is Light-independent protochlorophyllide reductase subunit N, found in Chaetosphaeridium globosum (Charophycean green alga).